The sequence spans 315 residues: Ferrochelatase (315 aa).

Histidine 193 and glutamate 273 together coordinate Fe cation.

This sequence belongs to the ferrochelatase family.

It localises to the cytoplasm. The catalysed reaction is heme b + 2 H(+) = protoporphyrin IX + Fe(2+). It participates in porphyrin-containing compound metabolism; protoheme biosynthesis; protoheme from protoporphyrin-IX: step 1/1. Its function is as follows. Catalyzes the ferrous insertion into protoporphyrin IX. In Wolbachia sp. subsp. Drosophila simulans (strain wRi), this protein is Ferrochelatase.